The primary structure comprises 353 residues: D-alanine--D-alanine ligase A (353 aa).

The 206-residue stretch at 141 to 346 (KRLVNEAGLS…YPEIINRLVA (206 aa)) folds into the ATP-grasp domain. Residue 169–224 (EQALGLPIFIKPARQGSSVGVHKVVTEADYQAAMSDGFTYDDKLLAEEFIQAREVE) coordinates ATP. The Mg(2+) site is built by aspartate 300, glutamate 313, and asparagine 315.

This sequence belongs to the D-alanine--D-alanine ligase family. Requires Mg(2+) as cofactor. Mn(2+) serves as cofactor.

It localises to the cytoplasm. It carries out the reaction 2 D-alanine + ATP = D-alanyl-D-alanine + ADP + phosphate + H(+). Its pathway is cell wall biogenesis; peptidoglycan biosynthesis. Cell wall formation. The protein is D-alanine--D-alanine ligase A of Brucella suis biovar 1 (strain 1330).